A 506-amino-acid polypeptide reads, in one-letter code: ATP synthase subunit alpha (506 aa).

ATP is bound at residue Gly-171–Thr-178.

The protein belongs to the ATPase alpha/beta chains family. In terms of assembly, F-type ATPases have 2 components, CF(1) - the catalytic core - and CF(0) - the membrane proton channel. CF(1) has five subunits: alpha(3), beta(3), gamma(1), delta(1), epsilon(1). CF(0) has four main subunits: a(1), b(1), b'(1) and c(9-12).

Its subcellular location is the cellular thylakoid membrane. It carries out the reaction ATP + H2O + 4 H(+)(in) = ADP + phosphate + 5 H(+)(out). Produces ATP from ADP in the presence of a proton gradient across the membrane. The alpha chain is a regulatory subunit. In Nostoc sp. (strain PCC 7120 / SAG 25.82 / UTEX 2576), this protein is ATP synthase subunit alpha.